A 1077-amino-acid polypeptide reads, in one-letter code: Protein hairless (1077 aa).

7 disordered regions span residues 14–75 (NRQT…SNNN), 97–141 (SSTS…HAKT), 269–322 (PSAA…SRPR), 340–368 (TLGRAALRTAARKRRRPHEPLTTSEDQQP), 408–504 (IEKP…PKAK), 533–876 (TTTS…PTSN), and 976–1077 (GQPA…LSKH). Composition is skewed to low complexity over residues 26–75 (NINS…SNNN), 115–130 (TTTPTTTTTPSSSSST), 269–286 (PSAATSATVTPTSAVTTA), and 293–308 (STSLSFSDDNSSIQSS). Basic and acidic residues-rich tracts occupy residues 408 to 439 (IEKPDTIKGEDDAERLEKEPKKAVSDDSESKE) and 449 to 459 (QPKDETVDVEM). The segment covering 596 to 607 (GSGGASSGGAGG) has biased composition (gly residues). Over residues 640-684 (PGSSSSSTSPATLSTQPTRLNSSYSIHSLLGGSSGSGSSSFSSSG) the composition is skewed to low complexity. Over residues 704-713 (SMYQPSSSSY) the composition is skewed to polar residues. Residues S720, S723, S746, and S753 each carry the phosphoserine modification. Residues 772 to 782 (PSTSGSASQDL) are compositionally biased toward polar residues. Composition is skewed to low complexity over residues 783-798 (SPPRSSPASPATTPRT) and 811-829 (ASPSASSSSCPSPGDRSAS). The segment covering 837–846 (QQQPHLQRSS) has biased composition (polar residues). Residues 865–876 (AGSPTSAPPTSN) show a composition bias toward low complexity. Over residues 984–995 (THPHLAHPHQHP) the composition is skewed to basic residues. Low complexity-rich tracts occupy residues 996-1012 (HPAALTTHHSPAHLATP) and 1023-1055 (SATSSHRTASTSPSSSSASASSSAATSGASSSA). Positions 1056–1070 (MFHTSSLRNEQSSDL) are enriched in polar residues.

During embryogenesis expression is primarily in endo- and mesodermal cell layers. Ovary, embryos, larval and pupal imaginal disks.

It is found in the nucleus. Functionally, is a potent antagonist of neurogenic gene activity during sensory organ development. The expression of distinct cell fates by the trichogen (shaft) / tormogen (socket) sister cell pair depends on the level of H activity. A certain threshold level of H activity is required, below which both sister cells adopt the tormogen fate. The protein is Protein hairless (H) of Drosophila melanogaster (Fruit fly).